The primary structure comprises 398 residues: Argininosuccinate synthase (398 aa).

8 to 16 (AYSGGLDTT) provides a ligand contact to ATP. Y87 is a binding site for L-citrulline. G117 is a binding site for ATP. Residues T119, N123, and D124 each contribute to the L-aspartate site. N123 is an L-citrulline binding site. Residues R127, S175, E259, and Y271 each contribute to the L-citrulline site.

This sequence belongs to the argininosuccinate synthase family. Type 1 subfamily. Homotetramer.

The protein resides in the cytoplasm. The enzyme catalyses L-citrulline + L-aspartate + ATP = 2-(N(omega)-L-arginino)succinate + AMP + diphosphate + H(+). Its pathway is amino-acid biosynthesis; L-arginine biosynthesis; L-arginine from L-ornithine and carbamoyl phosphate: step 2/3. This Corynebacterium jeikeium (strain K411) protein is Argininosuccinate synthase.